Consider the following 467-residue polypeptide: Ribulose bisphosphate carboxylase large chain (467 aa).

Lys-6 is subject to N6,N6,N6-trimethyllysine. Residues Asn-115 and Thr-165 each contribute to the substrate site. Residue Lys-167 is the Proton acceptor of the active site. Lys-169 provides a ligand contact to substrate. Mg(2+) is bound by residues Lys-193, Asp-195, and Glu-196. Position 193 is an N6-carboxylysine (Lys-193). His-286 functions as the Proton acceptor in the catalytic mechanism. 3 residues coordinate substrate: Arg-287, His-319, and Ser-371.

Belongs to the RuBisCO large chain family. Type I subfamily. Heterohexadecamer of 8 large chains and 8 small chains; disulfide-linked. The disulfide link is formed within the large subunit homodimers. Mg(2+) is required as a cofactor. The disulfide bond which can form in the large chain dimeric partners within the hexadecamer appears to be associated with oxidative stress and protein turnover.

It is found in the plastid. It localises to the chloroplast. It carries out the reaction 2 (2R)-3-phosphoglycerate + 2 H(+) = D-ribulose 1,5-bisphosphate + CO2 + H2O. The catalysed reaction is D-ribulose 1,5-bisphosphate + O2 = 2-phosphoglycolate + (2R)-3-phosphoglycerate + 2 H(+). Functionally, ruBisCO catalyzes two reactions: the carboxylation of D-ribulose 1,5-bisphosphate, the primary event in carbon dioxide fixation, as well as the oxidative fragmentation of the pentose substrate in the photorespiration process. Both reactions occur simultaneously and in competition at the same active site. This chain is Ribulose bisphosphate carboxylase large chain, found in Cedrus atlantica (Atlas cedar).